A 4043-amino-acid chain; its full sequence is Hybrid PKS-NRPS synthetase thnA (4043 aa).

The Ketosynthase family 3 (KS3) domain maps to 6 to 440 (LEPIAIVGSA…GSNAHAILEE (435 aa)). Active-site for beta-ketoacyl synthase activity residues include cysteine 179, histidine 319, and histidine 360. Residues 558–894 (VFTGQGAQWA…FSDALGFVWT (337 aa)) form a malonyl-CoA:ACP transacylase (MAT) domain region. Residues 952–1090 (HEILGTILPE…ATVKIILGTP (139 aa)) are N-terminal hotdog fold. The tract at residues 952–1256 (HEILGTILPE…LSIKTFAPAT (305 aa)) is dehydratase (DH) domain. The PKS/mFAS DH domain maps to 952–1258 (HEILGTILPE…IKTFAPATQA (307 aa)). Catalysis depends on histidine 984, which acts as the Proton acceptor; for dehydratase activity. Residues 1105–1258 (LFPIDADRFY…IKTFAPATQA (154 aa)) form a C-terminal hotdog fold region. Aspartate 1166 (proton donor; for dehydratase activity) is an active-site residue. Positions 1417 to 1591 (LASMMKQITH…RKAGFAGVDA (175 aa)) are methyltransferase (MT) domain. The tract at residues 2146 to 2320 (TYLLVGLTGK…GSTFDIGQVA (175 aa)) is ketoreductase (KR) domain. One can recognise a Carrier 1 domain in the interval 2434-2512 (EQALDILKEC…ELCDRVVDKL (79 aa)). Serine 2472 bears the O-(pantetheine 4'-phosphoryl)serine mark. The segment at 2521–2618 (GKQGESQPPA…PPPPEPAVER (98 aa)) is disordered. Low complexity predominate over residues 2527–2536 (QPPASTAQPQ). Residues 2537–2547 (PVAPKPKPLPV) show a composition bias toward pro residues. Positions 2578 to 2605 (YSATEASTRSGSPSEATRLSQKVSSKLQ) are enriched in polar residues. The tract at residues 2626–3067 (IKSVPISLGQ…IPRFSEKQLA (442 aa)) is condensation (C) domain. The adenylation (A) domain stretch occupies residues 3092–3496 (QVARENPDKV…GTMVFHSRMA (405 aa)). Residues 3614–3695 (TELTETMIQL…EMAQKVEETI (82 aa)) enclose the Carrier 2 domain. Serine 3655 bears the O-(pantetheine 4'-phosphoryl)serine mark. Positions 3736–3954 (ITGATGFLSK…DMLPAVLTAQ (219 aa)) are reductase (R) domain.

It in the C-terminal section; belongs to the NRP synthetase family.

The enzyme catalyses malate + 6 malonyl-CoA + acetyl-CoA + 2 AH2 + 2 S-adenosyl-L-methionine + 5 NADPH + 9 H(+) = trihazone A + 2 A + 2 S-adenosyl-L-homocysteine + 6 CO2 + 5 NADP(+) + 7 CoA + 6 H2O. It functions in the pathway secondary metabolite biosynthesis. Functionally, hybrid PKS-NRPS synthetase; part of the gene cluster that produces the tetronate natural products trihazones. The PKS-NRPS synthetase thnA with the help of the trans-enoyl reductase thnE are responsible for the synthesis of the carboxylmethyl containing trihazone A. The PKS portion of thnA synthesizes beta-keto-triene chain from one acetyl-CoA and 6 equivalents of malonyl-CoA, in collaboration with thnE, which selectively reduces the enoyl intermediate during the first and fourth iteration of the PKS. The NRPS domain selects and activates malate, of which the alpha-hydroxyl group attacks the completed polyketide acyl-S-ACP chain to form the ester product. Intramolecular Dieckmann cyclization catalyzed by the terminal reductase domain releases the product as trihazone A from the PKS-NPRS. The pathway begins with the formation of trihazone A by the hybrid PKS-NRPS synthetase thnA and the trans-enoyl reductase thnE. Trihazone A is further decarboxylated by the 2-oxoglutarate-dependent dioxygenase thnC to produce trihazone D. The function of the FAD-dependent monooxygenase thnD has still to be identified. In Trichoderma harzianum (Hypocrea lixii), this protein is Hybrid PKS-NRPS synthetase thnA.